A 351-amino-acid polypeptide reads, in one-letter code: LETM1 domain-containing protein 1 (351 aa).

The Cytoplasmic segment spans residues 1 to 130 (MLSGMALCRT…FRRDIIKAAP (130 aa)). A helical membrane pass occupies residues 131–151 (VVIISIPPFANYLVFVLMYFF). Residues 152 to 351 (PRQLLIRHFW…SANYLQSIKQ (200 aa)) are Mitochondrial intermembrane-facing. Residues 172-351 (IYHRMRVEAY…SANYLQSIKQ (180 aa)) enclose the Letm1 RBD domain.

Its subcellular location is the mitochondrion outer membrane. The protein resides in the nucleus. It localises to the mitochondrion inner membrane. Its function is as follows. May play an essential role for mitochondrial structure and function. This is LETM1 domain-containing protein 1 from Xenopus tropicalis (Western clawed frog).